We begin with the raw amino-acid sequence, 510 residues long: ATP synthase subunit alpha, mitochondrial (510 aa).

171 to 178 (GDRQTGKT) is a binding site for ATP.

The protein belongs to the ATPase alpha/beta chains family. F-type ATPases have 2 components, CF(1) - the catalytic core - and CF(0) - the membrane proton channel. CF(1) has five subunits: alpha(3), beta(3), gamma(1), delta(1), epsilon(1). CF(0) has three main subunits: a, b and c.

The protein localises to the mitochondrion. It localises to the mitochondrion inner membrane. Functionally, mitochondrial membrane ATP synthase (F(1)F(0) ATP synthase or Complex V) produces ATP from ADP in the presence of a proton gradient across the membrane which is generated by electron transport complexes of the respiratory chain. F-type ATPases consist of two structural domains, F(1) - containing the extramembraneous catalytic core, and F(0) - containing the membrane proton channel, linked together by a central stalk and a peripheral stalk. During catalysis, ATP synthesis in the catalytic domain of F(1) is coupled via a rotary mechanism of the central stalk subunits to proton translocation. Subunits alpha and beta form the catalytic core in F(1). Rotation of the central stalk against the surrounding alpha(3)beta(3) subunits leads to hydrolysis of ATP in three separate catalytic sites on the beta subunits. Subunit alpha does not bear the catalytic high-affinity ATP-binding sites. This chain is ATP synthase subunit alpha, mitochondrial (ATPA), found in Helianthus annuus (Common sunflower).